Reading from the N-terminus, the 159-residue chain is Phosphopantetheine adenylyltransferase (159 aa).

Threonine 10 is a binding site for substrate. ATP contacts are provided by residues 10-11 (TF) and histidine 18. Lysine 42, methionine 74, and arginine 88 together coordinate substrate. ATP contacts are provided by residues 89–91 (GLR), glutamate 99, and 124–130 (WSFISSS).

The protein belongs to the bacterial CoaD family. As to quaternary structure, homohexamer. It depends on Mg(2+) as a cofactor.

It is found in the cytoplasm. The catalysed reaction is (R)-4'-phosphopantetheine + ATP + H(+) = 3'-dephospho-CoA + diphosphate. The protein operates within cofactor biosynthesis; coenzyme A biosynthesis; CoA from (R)-pantothenate: step 4/5. Reversibly transfers an adenylyl group from ATP to 4'-phosphopantetheine, yielding dephospho-CoA (dPCoA) and pyrophosphate. This is Phosphopantetheine adenylyltransferase from Salmonella agona (strain SL483).